The chain runs to 222 residues: UPF0758 protein YicR (222 aa).

Residues 100–222 (PLLSPEMTRE…YVSFAERGWI (123 aa)) enclose the MPN domain. Zn(2+) is bound by residues histidine 171, histidine 173, and aspartate 184. Residues 171 to 184 (HNHPSGCAEPSKAD) carry the JAMM motif motif.

The protein belongs to the UPF0758 family. YicR subfamily.

In Escherichia coli O81 (strain ED1a), this protein is UPF0758 protein YicR.